Here is a 52-residue protein sequence, read N- to C-terminus: Large ribosomal subunit protein bL32c (52 aa).

This sequence belongs to the bacterial ribosomal protein bL32 family.

The protein resides in the plastid. It localises to the chloroplast. In Olimarabidopsis pumila (Dwarf rocket), this protein is Large ribosomal subunit protein bL32c.